The chain runs to 333 residues: Phosphoribosylformylglycinamidine cyclo-ligase (333 aa).

This sequence belongs to the AIR synthase family.

Its subcellular location is the cytoplasm. It carries out the reaction 2-formamido-N(1)-(5-O-phospho-beta-D-ribosyl)acetamidine + ATP = 5-amino-1-(5-phospho-beta-D-ribosyl)imidazole + ADP + phosphate + H(+). Its pathway is purine metabolism; IMP biosynthesis via de novo pathway; 5-amino-1-(5-phospho-D-ribosyl)imidazole from N(2)-formyl-N(1)-(5-phospho-D-ribosyl)glycinamide: step 2/2. The polypeptide is Phosphoribosylformylglycinamidine cyclo-ligase (Methanosarcina barkeri (strain Fusaro / DSM 804)).